Consider the following 49-residue polypeptide: Astexin-3 (49 aa).

The propeptide occupies Met1 to Lys25. A cross-link (isoaspartyl glycine isopeptide (Gly-Asp)) is located at residues Gly26–Asp34.

Post-translationally, this lasso peptide is hydrolyzed to a linear form by the isopeptidase AtxE2, in vitro. The isopeptidase AtxE2 only recognizes the threaded form (but not the unthreaded form).

It localises to the cytoplasm. The protein localises to the secreted. Shows weak antimicrobial activity against its phylogenetic relative Caulobacter crescentus. Does not show activity against other bacteria tested (E.coli, Vibrio sp, Burkhoderia thailandensis, and Salmonella newport). The polypeptide is Astexin-3 (Asticcacaulis excentricus (strain ATCC 15261 / DSM 4724 / KCTC 12464 / NCIMB 9791 / VKM B-1370 / CB 48)).